A 405-amino-acid chain; its full sequence is Secreted aspartic protease 8 (405 aa).

An N-terminal signal peptide occupies residues 1–25 (MVSIITFTKNVLVTLAFALLAQGLA). Residue N50 is glycosylated (N-linked (GlcNAc...) asparagine). The disordered stretch occupies residues 52–78 (TAHGQHHQSQQQQQQQQQQPAQKRGTV). Over residues 58–70 (HQSQQQQQQQQQQ) the composition is skewed to low complexity. Residues 89–392 (YAATITVGSN…DLDGNTISLA (304 aa)) form the Peptidase A1 domain. The active site involves D107. 107–109 (DTG) serves as a coordination point for pepstatin A. The cysteines at positions 122 and 134 are disulfide-linked. D292 is a catalytic residue. Position 292–296 (292–296 (DSGTT)) interacts with pepstatin A. An intrachain disulfide couples C327 to C358.

This sequence belongs to the peptidase A1 family. In terms of assembly, monomer.

It localises to the secreted. The enzyme catalyses Preferential cleavage at the carboxyl of hydrophobic amino acids, but fails to cleave 15-Leu-|-Tyr-16, 16-Tyr-|-Leu-17 and 24-Phe-|-Phe-25 of insulin B chain. Activates trypsinogen, and degrades keratin.. In terms of biological role, secreted aspartic peptidases (SAPs) are a group of ten acidic hydrolases considered as key virulence factors. These enzymes supply the fungus with nutrient amino acids as well as are able to degrade the selected host's proteins involved in the immune defense. Moreover, acts toward human hemoglobin though limited proteolysis to generate a variety of antimicrobial hemocidins, enabling to compete with the other microorganisms of the same physiological niche using the microbicidal peptides generated from the host protein. Functionally, plays a key role in defense against host by cleaving histatin-5 (Hst 5), a peptide from human saliva that carries out fungicidal activity. The cleavage rate decreases in an order of SAP2 &gt; SAP9 &gt; SAP3 &gt; SAP7 &gt; SAP4 &gt; SAP1 &gt; SAP8. The hydrolysis of Hst 5 by SAP8 causes production of the DSHAKRHHGY, HHSHRGY and FHEKHHSHRGY peptides. This chain is Secreted aspartic protease 8, found in Candida albicans (Yeast).